Reading from the N-terminus, the 166-residue chain is Minor capsid protein VP2 (166 aa).

Residues 138 to 166 (PAPSGFVNPNYQPSPPRLKLGPRPPSTNV) are disordered. Residues 149–166 (QPSPPRLKLGPRPPSTNV) show a composition bias toward pro residues.

It belongs to the vesivirus VP2 protein family. Homooligomer. The portal-like structure consists in 12 copies of VP2. Interacts with capsid protein VP1.

The protein resides in the virion. The protein localises to the host cytoplasm. Minor structural protein that forms a portal-like structure at a unique three-fold axis of symmetry, following binding to the host receptor. The channel formed by VP2 may allow the delivery of the viral genome through the host endosomal membrane. The chain is Minor capsid protein VP2 from Homo sapiens (Human).